The sequence spans 89 residues: Small ribosomal subunit protein uS17 (89 aa).

This sequence belongs to the universal ribosomal protein uS17 family. As to quaternary structure, part of the 30S ribosomal subunit.

Functionally, one of the primary rRNA binding proteins, it binds specifically to the 5'-end of 16S ribosomal RNA. This Xanthomonas campestris pv. campestris (strain B100) protein is Small ribosomal subunit protein uS17.